We begin with the raw amino-acid sequence, 334 residues long: Spermatogenesis-associated protein 32 (334 aa).

Residues 24–98 (SDHHRHHHHH…TESPEQQNYR (75 aa)) are disordered. A compositionally biased stretch (acidic residues) spans 37–47 (ENEDEDTEVEA). Positions 48–60 (ELPRTEPPPKVDP) are enriched in basic and acidic residues. The span at 77 to 98 (SKTTPETEGDSYTESPEQQNYR) shows a compositional bias: polar residues. Phosphoserine occurs at positions 135 and 138.

Interacts with syntaxin-1 and ACTB. In terms of tissue distribution, highly expressed in the testis and weakly in the brain and heart.

In Mus musculus (Mouse), this protein is Spermatogenesis-associated protein 32 (Spata32).